A 968-amino-acid chain; its full sequence is RNA polymerase-associated protein RapA (968 aa).

Positions 164-334 (EVGQRHAPRV…FARLRLLDPD (171 aa)) constitute a Helicase ATP-binding domain. 177–184 (DEVGLGKT) contributes to the ATP binding site. Positions 280–283 (DEAH) match the DEAH box motif. Residues 490–644 (RVEWLLNYLV…TCPTGRTIYD (155 aa)) enclose the Helicase C-terminal domain.

It belongs to the SNF2/RAD54 helicase family. RapA subfamily. As to quaternary structure, interacts with the RNAP. Has a higher affinity for the core RNAP than for the holoenzyme. Its ATPase activity is stimulated by binding to RNAP.

Functionally, transcription regulator that activates transcription by stimulating RNA polymerase (RNAP) recycling in case of stress conditions such as supercoiled DNA or high salt concentrations. Probably acts by releasing the RNAP, when it is trapped or immobilized on tightly supercoiled DNA. Does not activate transcription on linear DNA. Probably not involved in DNA repair. The chain is RNA polymerase-associated protein RapA from Yersinia pseudotuberculosis serotype O:1b (strain IP 31758).